A 446-amino-acid polypeptide reads, in one-letter code: Tubulin beta-8 chain (446 aa).

GTP is bound by residues Gln-11, Glu-69, Ser-138, Gly-142, Thr-143, Gly-144, Asn-204, and Asn-226. Residue Glu-69 participates in Mg(2+) binding. Positions 426 to 446 (QDATAEDDYDEDDDAAAADEA) are disordered. Residues 429–446 (TAEDDYDEDDDAAAADEA) show a composition bias toward acidic residues.

Belongs to the tubulin family. As to quaternary structure, dimer of alpha and beta chains. A typical microtubule is a hollow water-filled tube with an outer diameter of 25 nm and an inner diameter of 15 nM. Alpha-beta heterodimers associate head-to-tail to form protofilaments running lengthwise along the microtubule wall with the beta-tubulin subunit facing the microtubule plus end conferring a structural polarity. Microtubules usually have 13 protofilaments but different protofilament numbers can be found in some organisms and specialized cells. Mg(2+) serves as cofactor. In terms of tissue distribution, expressed in anthers.

It is found in the cytoplasm. It localises to the cytoskeleton. In terms of biological role, tubulin is the major constituent of microtubules, a cylinder consisting of laterally associated linear protofilaments composed of alpha- and beta-tubulin heterodimers. Microtubules grow by the addition of GTP-tubulin dimers to the microtubule end, where a stabilizing cap forms. Below the cap, tubulin dimers are in GDP-bound state, owing to GTPase activity of alpha-tubulin. The polypeptide is Tubulin beta-8 chain (TUBB8) (Oryza sativa subsp. japonica (Rice)).